Here is a 444-residue protein sequence, read N- to C-terminus: CCA-adding enzyme (444 aa).

2 residues coordinate ATP: Ser-57 and Arg-60. Positions 57 and 60 each coordinate CTP. The Mg(2+) site is built by Asp-69, Asp-71, and Asp-124. His-147, Lys-168, and Tyr-177 together coordinate ATP. CTP-binding residues include His-147, Lys-168, and Tyr-177.

The protein belongs to the tRNA nucleotidyltransferase/poly(A) polymerase family. Archaeal CCA-adding enzyme subfamily. In terms of assembly, homodimer. It depends on Mg(2+) as a cofactor.

The enzyme catalyses a tRNA precursor + 2 CTP + ATP = a tRNA with a 3' CCA end + 3 diphosphate. It carries out the reaction a tRNA with a 3' CCA end + 2 CTP + ATP = a tRNA with a 3' CCACCA end + 3 diphosphate. Its function is as follows. Catalyzes the addition and repair of the essential 3'-terminal CCA sequence in tRNAs without using a nucleic acid template. Adds these three nucleotides in the order of C, C, and A to the tRNA nucleotide-73, using CTP and ATP as substrates and producing inorganic pyrophosphate. tRNA 3'-terminal CCA addition is required both for tRNA processing and repair. Also involved in tRNA surveillance by mediating tandem CCA addition to generate a CCACCA at the 3' terminus of unstable tRNAs. While stable tRNAs receive only 3'-terminal CCA, unstable tRNAs are marked with CCACCA and rapidly degraded. The polypeptide is CCA-adding enzyme (Methanococcus maripaludis (strain DSM 14266 / JCM 13030 / NBRC 101832 / S2 / LL)).